The primary structure comprises 608 residues: ABC transporter ATP-binding protein RamB (608 aa).

Transmembrane regions (helical) follow at residues 25–45, 66–86, 141–161, 166–186, and 253–273; these read GVLV…FLVG, LWLG…RGVF, GLVL…LGLL, ALLV…LVTL, and AALG…VEWL. Positions 30-296 constitute an ABC transmembrane type-1 domain; sequence LALWSLAESG…FTYLVQSLLP (267 aa). The interval 321-362 is disordered; it reads GPEPEPEPEPEPEPEPELGSGLEPEPEPASEPESGPSTASAS. The span at 324-336 shows a compositional bias: acidic residues; that stretch reads PEPEPEPEPEPEP. Low complexity predominate over residues 351-362; it reads EPESGPSTASAS. The ABC transporter domain maps to 376-605; the sequence is VELRSVTLSY…SPLYRDLTGH (230 aa). 410–417 is an ATP binding site; it reads GPSGIGKS.

Belongs to the ABC transporter superfamily.

The protein localises to the cell membrane. Its function is as follows. Probably involved in exporting SapB from the cell. Expression of the ram locus (ramA, ramB and ramR) induces rapid aerial mycelium formation in S.lividans. In Streptomyces coelicolor (strain ATCC BAA-471 / A3(2) / M145), this protein is ABC transporter ATP-binding protein RamB.